The following is a 101-amino-acid chain: MAKLALIEREKKRARLVAKFAAKREALKAIVEDQSKSEEERYEARLELQQLPRNANPTRQRNRCAITGRPRGTFRKFGLARNKIREIAFRGEIPGLTKASW.

The protein belongs to the universal ribosomal protein uS14 family. Part of the 30S ribosomal subunit. Contacts proteins S3 and S10.

Functionally, binds 16S rRNA, required for the assembly of 30S particles and may also be responsible for determining the conformation of the 16S rRNA at the A site. The sequence is that of Small ribosomal subunit protein uS14 from Burkholderia ambifaria (strain MC40-6).